We begin with the raw amino-acid sequence, 154 residues long: Calmodulin-like protein 6 (154 aa).

EF-hand domains follow at residues 1–36 (MDSTELNRVFQMFDKDGDGKITTKELNESFKNLGII), 37–72 (IPEDELTQIIQKIDVNGDGCVDIEEFGELYKTIMVE), 77–112 (VGEEDMKEAFNVFDRNGDGFITVDELKAVLSSLGLK), and 115–150 (KTLEECRKMIMQVDVDGDGRVNYMEFRQMMKKGRFF). Positions 14, 16, 18, 20, 25, 50, 52, 54, 56, 61, 90, 92, 94, 101, 128, 130, 132, 134, and 139 each coordinate Ca(2+).

The protein belongs to the calmodulin family.

Functionally, potential calcium sensor. The sequence is that of Calmodulin-like protein 6 (CML6) from Arabidopsis thaliana (Mouse-ear cress).